The following is a 285-amino-acid chain: MKFGIVINVSRERALELARKLVSWLEAQGIGYIFETLSAERIGSALSAPIEELNTQCDAFISLGGDGTLLFTSQHSVTKPVVGINVGYLGFLTEFTQEEMFDAVEKVIKGTYTIHTRTQLEASVPADGRNEQFLALNDVVIEKGTYPRIPAFVIKLDGELLSSYRADGIIIATSTGSTAYSMSAGGPIIAPKSSVFVITPICPHMLTVRPIVISDEKIIEISVEAPDGEFPLNCDGHLRRMLEPMERVTVRKSIRLINLVANENRDYCEVLRTKLLWGREHNSGL.

Residue Asp-66 is the Proton acceptor of the active site. Residues 66 to 67 (DG), 137 to 138 (ND), Arg-148, Arg-165, Asp-167, and 178 to 183 (TAYSMS) contribute to the NAD(+) site.

The protein belongs to the NAD kinase family. A divalent metal cation serves as cofactor.

It localises to the cytoplasm. The catalysed reaction is NAD(+) + ATP = ADP + NADP(+) + H(+). In terms of biological role, involved in the regulation of the intracellular balance of NAD and NADP, and is a key enzyme in the biosynthesis of NADP. Catalyzes specifically the phosphorylation on 2'-hydroxyl of the adenosine moiety of NAD to yield NADP. The chain is NAD kinase from Chlorobium luteolum (strain DSM 273 / BCRC 81028 / 2530) (Pelodictyon luteolum).